The primary structure comprises 315 residues: NAD-dependent protein lipoamidase sirtuin-4, mitochondrial (315 aa).

A mitochondrion-targeting transit peptide spans 1–29; the sequence is MRMSFGLTFKRTAKVHWRANFSQQCSLRS. The Deacetylase sirtuin-type domain occupies 38–315; it reads PPLDPEKVKE…GELLPLIDPR (278 aa). Residues 63 to 83 and 144 to 147 contribute to the NAD(+) site; these read GAGI…VGLY and QNVD. Histidine 162 functions as the Proton acceptor in the catalytic mechanism. The Zn(2+) site is built by cysteine 170, cysteine 173, cysteine 221, and cysteine 224. NAD(+) contacts are provided by residues 261–263, 287–289, and cysteine 305; these read GSS and NIG.

Belongs to the sirtuin family. Class II subfamily. As to quaternary structure, interacts with GLUD1, IDE and SLC25A5. Interacts with DLAT and PDHX. Interacts with MCCC1 (via the biotin carboxylation domain). Interacts with PCCA and PC. Zn(2+) serves as cofactor.

Its subcellular location is the mitochondrion matrix. It catalyses the reaction N(6)-[(R)-lipoyl]-L-lysyl-[protein] + NAD(+) + H2O = 2''-O-lipoyl-ADP-D-ribose + nicotinamide + L-lysyl-[protein]. The catalysed reaction is N(6)-biotinyl-L-lysyl-[protein] + NAD(+) + H2O = 2''-O-biotinyl-ADP-D-ribose + nicotinamide + L-lysyl-[protein]. It carries out the reaction N(6)-acetyl-L-lysyl-[protein] + NAD(+) + H2O = 2''-O-acetyl-ADP-D-ribose + nicotinamide + L-lysyl-[protein]. The enzyme catalyses L-cysteinyl-[protein] + NAD(+) = S-(ADP-D-ribosyl)-L-cysteinyl-[protein] + nicotinamide + H(+). Its function is as follows. Acts as a NAD-dependent protein lipoamidase, biotinylase, deacetylase and ADP-ribosyl transferase. Catalyzes more efficiently removal of lipoyl- and biotinyl- than acetyl-lysine modifications. Inhibits the pyruvate dehydrogenase complex (PDH) activity via the enzymatic hydrolysis of the lipoamide cofactor from the E2 component, DLAT, in a phosphorylation-independent manner. Catalyzes the transfer of ADP-ribosyl groups onto target proteins, including mitochondrial GLUD1, inhibiting GLUD1 enzyme activity. Acts as a negative regulator of mitochondrial glutamine metabolism by mediating mono ADP-ribosylation of GLUD1: expressed in response to DNA damage and negatively regulates anaplerosis by inhibiting GLUD1, leading to block metabolism of glutamine into tricarboxylic acid cycle and promoting cell cycle arrest. In response to mTORC1 signal, SIRT4 expression is repressed, promoting anaplerosis and cell proliferation. Acts as a tumor suppressor. Also acts as a NAD-dependent protein deacetylase: mediates deacetylation of 'Lys-471' of MLYCD, inhibiting its activity, thereby acting as a regulator of lipid homeostasis. Does not seem to deacetylate PC. Controls fatty acid oxidation by inhibiting PPARA transcriptional activation. Impairs SIRT1-PPARA interaction probably through the regulation of NAD(+) levels. Down-regulates insulin secretion. The chain is NAD-dependent protein lipoamidase sirtuin-4, mitochondrial from Bos taurus (Bovine).